The following is a 552-amino-acid chain: Phosphoglucomutase (552 aa).

The Phosphoserine intermediate role is filled by serine 135. Residues serine 135, aspartate 289, aspartate 291, and aspartate 293 each coordinate Mg(2+).

Belongs to the phosphohexose mutase family. Requires Mg(2+) as cofactor.

The catalysed reaction is alpha-D-glucose 1-phosphate = alpha-D-glucose 6-phosphate. Its pathway is glycolipid metabolism; diglucosyl-diacylglycerol biosynthesis. In terms of biological role, catalyzes the interconversion between glucose-6-phosphate and alpha-glucose-1-phosphate. This is the first step in the biosynthesis of diglucosyl-diacylglycerol (Glc2-DAG), i.e. a glycolipid found in the membrane, which is also used as a membrane anchor for lipoteichoic acid (LTA). The polypeptide is Phosphoglucomutase (pgcA) (Staphylococcus saprophyticus subsp. saprophyticus (strain ATCC 15305 / DSM 20229 / NCIMB 8711 / NCTC 7292 / S-41)).